The primary structure comprises 665 residues: DNA ligase (665 aa).

NAD(+) is bound by residues 31 to 35 (DQEFD), 80 to 81 (SL), and Glu110. Catalysis depends on Lys112, which acts as the N6-AMP-lysine intermediate. Residues Arg133, Glu170, Lys285, and Lys309 each contribute to the NAD(+) site. Positions 403, 406, 421, and 427 each coordinate Zn(2+). The BRCT domain maps to 587–665 (EHTDKLAGKS…SEEEFLQMIE (79 aa)).

This sequence belongs to the NAD-dependent DNA ligase family. LigA subfamily. Mg(2+) is required as a cofactor. The cofactor is Mn(2+).

The enzyme catalyses NAD(+) + (deoxyribonucleotide)n-3'-hydroxyl + 5'-phospho-(deoxyribonucleotide)m = (deoxyribonucleotide)n+m + AMP + beta-nicotinamide D-nucleotide.. Functionally, DNA ligase that catalyzes the formation of phosphodiester linkages between 5'-phosphoryl and 3'-hydroxyl groups in double-stranded DNA using NAD as a coenzyme and as the energy source for the reaction. It is essential for DNA replication and repair of damaged DNA. The sequence is that of DNA ligase from Phocaeicola vulgatus (strain ATCC 8482 / DSM 1447 / JCM 5826 / CCUG 4940 / NBRC 14291 / NCTC 11154) (Bacteroides vulgatus).